We begin with the raw amino-acid sequence, 260 residues long: Type III pantothenate kinase (260 aa).

6 to 13 (DCGNTNTV) provides a ligand contact to ATP. A substrate-binding site is contributed by 107 to 110 (GPDR). The Proton acceptor role is filled by Asp109. Asp129 provides a ligand contact to K(+). Thr132 contacts ATP. Residue Thr184 coordinates substrate.

It belongs to the type III pantothenate kinase family. Homodimer. It depends on NH4(+) as a cofactor. K(+) serves as cofactor.

It localises to the cytoplasm. The enzyme catalyses (R)-pantothenate + ATP = (R)-4'-phosphopantothenate + ADP + H(+). Its pathway is cofactor biosynthesis; coenzyme A biosynthesis; CoA from (R)-pantothenate: step 1/5. Its function is as follows. Catalyzes the phosphorylation of pantothenate (Pan), the first step in CoA biosynthesis. This is Type III pantothenate kinase from Ruegeria sp. (strain TM1040) (Silicibacter sp.).